The primary structure comprises 256 residues: Tryptophan synthase alpha chain (256 aa).

Residues glutamate 46 and aspartate 57 each act as proton acceptor in the active site.

It belongs to the TrpA family. Tetramer of two alpha and two beta chains.

The enzyme catalyses (1S,2R)-1-C-(indol-3-yl)glycerol 3-phosphate + L-serine = D-glyceraldehyde 3-phosphate + L-tryptophan + H2O. Its pathway is amino-acid biosynthesis; L-tryptophan biosynthesis; L-tryptophan from chorismate: step 5/5. Its function is as follows. The alpha subunit is responsible for the aldol cleavage of indoleglycerol phosphate to indole and glyceraldehyde 3-phosphate. The chain is Tryptophan synthase alpha chain from Bacteroides thetaiotaomicron (strain ATCC 29148 / DSM 2079 / JCM 5827 / CCUG 10774 / NCTC 10582 / VPI-5482 / E50).